The following is a 181-amino-acid chain: UPF0398 protein LMHCC_0668 (181 aa).

The protein belongs to the UPF0398 family.

This is UPF0398 protein LMHCC_0668 from Listeria monocytogenes serotype 4a (strain HCC23).